A 672-amino-acid polypeptide reads, in one-letter code: Glycogen [starch] synthase (672 aa).

Residue K56 coordinates UDP-alpha-D-glucose. The disordered stretch occupies residues 645–672 (MRDNEGKVPSAATSRRPSIHSSDGEDDE). The span at 655–665 (AATSRRPSIHS) shows a compositional bias: polar residues.

The protein belongs to the glycosyltransferase 3 family. As to quaternary structure, forms a hetero-octamer with each protomer of the gsy-1 homotetramer bound to one molecule of gyg-1. The N-terminus is involved in interprotomer contacts with gyg-1. The interaction with gyg-1 is required for glycogen production but is not required for gsy-1 intrinsic activity.

It catalyses the reaction [(1-&gt;4)-alpha-D-glucosyl](n) + UDP-alpha-D-glucose = [(1-&gt;4)-alpha-D-glucosyl](n+1) + UDP + H(+). It functions in the pathway glycan biosynthesis; glycogen biosynthesis. In terms of biological role, transfers the glycosyl residue from UDP-Glc to the non-reducing end of alpha-1,4-glucan. The protein is Glycogen [starch] synthase of Caenorhabditis elegans.